Here is a 236-residue protein sequence, read N- to C-terminus: Small ribosomal subunit protein uS2c (236 aa).

The protein belongs to the universal ribosomal protein uS2 family.

The protein localises to the plastid. Its subcellular location is the chloroplast. This is Small ribosomal subunit protein uS2c (rps2) from Zea mays (Maize).